A 547-amino-acid chain; its full sequence is Fumarate reductase (CoM/CoB) subunit A (547 aa).

This sequence belongs to the FAD-dependent oxidoreductase 2 family. In terms of assembly, subunit A of the heterodimeric fumarate reductase of methanogenic Archaea, composed of subunits A (TfrA) and B (TfrB). Requires an oxidized flavin as cofactor.

The protein localises to the cytoplasm. The catalysed reaction is coenzyme B + coenzyme M + fumarate = coenzyme M-coenzyme B heterodisulfide + succinate. Catalyzes the reduction of fumarate with reduced coenzyme M (CoM-S-H) and coenzyme B (CoB-S-H). In vitro, is able to reduces fumarate with reduced benzyl viologen, oxidize CoM-S-H and CoB-S-H to CoM-S-S-CoB with methylene blue, and reduce CoM-S-S-CoB with reduced benzyl viologen. The enzyme has specificity for the two thiol compounds as the CoB--CoM heterodisulfide reductase. The enzyme is very sensitive to oxygen. The protein is Fumarate reductase (CoM/CoB) subunit A of Methanothermobacter marburgensis (strain ATCC BAA-927 / DSM 2133 / JCM 14651 / NBRC 100331 / OCM 82 / Marburg) (Methanobacterium thermoautotrophicum).